We begin with the raw amino-acid sequence, 288 residues long: Lysosomal thioesterase PPT2 homolog (288 aa).

Positions M1 to A22 are cleaved as a signal peptide. S98 functions as the Nucleophile in the catalytic mechanism. Residue N192 is glycosylated (N-linked (GlcNAc...) asparagine). Residues D214 and H269 contribute to the active site.

This sequence belongs to the palmitoyl-protein thioesterase family. In terms of tissue distribution, expressed in adult head and crop.

Its subcellular location is the lysosome. It catalyses the reaction hexadecanoyl-CoA + H2O = hexadecanoate + CoA + H(+). The catalysed reaction is S-hexadecanoyl-N-acetylcysteamine + H2O = N-acetylcysteamine + hexadecanoate + H(+). Functionally, catalyzes the cleavage of thioester bonds from S-palmitoyl-CoA or S-palmitoyl-N-acetylcysteamine (unbranched structures) but does not have activity against palmitoylcysteine or palmitoylated proteins, branched structures or bulky head groups. Conversely, hydrolyzes both long and short chain fatty acyl-CoA substrate. The sequence is that of Lysosomal thioesterase PPT2 homolog (Ppt2) from Drosophila melanogaster (Fruit fly).